A 247-amino-acid polypeptide reads, in one-letter code: MASQPPEEPAEFQVSDELECKICYNRYNLKQRKPKVLECCHRVCAKCLYKIIDFGDSPQGVIVCPFCRFETCLPDDEVSSLPDDNNILVNLTCGSKGKKCLPENPTELLLTPKRLASLVSPSHTSSNCLVITIMEVQRESSPSLSSTPVVEFYRPASFDSVTTVSHNWTVWNCTSLLFQTSIRVLVWLLGLLYFSSLPLGIYLLVSKKVTLGVVFVSLVPSSLVILMVYGFCQCVCHEFLDCMALPS.

An RING-type zinc finger spans residues 20–68 (CKICYNRYNLKQRKPKVLECCHRVCAKCLYKIIDFGDSPQGVIVCPFCR). 2 helical membrane passes run 184 to 204 (VLVWLLGLLYFSSLPLGIYLL) and 211 to 231 (LGVVFVSLVPSSLVILMVYGF).

As to quaternary structure, interacts with ATP6V0C.

It localises to the membrane. It is found in the cytoplasm. It carries out the reaction S-ubiquitinyl-[E2 ubiquitin-conjugating enzyme]-L-cysteine + [acceptor protein]-L-lysine = [E2 ubiquitin-conjugating enzyme]-L-cysteine + N(6)-ubiquitinyl-[acceptor protein]-L-lysine.. The protein operates within protein modification; protein ubiquitination. In terms of biological role, E3 ubiquitin-protein ligase that mediates the ubiquitination of ATP6V0C and targets it to degradation via the ubiquitin-proteasome pathway. Also plays a role in the inhibition of TLR-triggered innate immune response by mediating 'Lys'-48-linked ubiquitination and subsequent degradation of NF-kappa-B component RELA. The chain is E3 ubiquitin-protein ligase RNF182 (Rnf182) from Rattus norvegicus (Rat).